The sequence spans 386 residues: MCERAARLCRAGAHRLLREPPQQGRALGGLLRWVGARMGEPRESLAPAAPADPGPASPRGGTAVILDIFRRADKNDDGKLSLEEFQLFFADGVLNEKELEDLFHTIDSDNTNHVDTKELCDYFVDHMGDYEDVLASLETLNHSVLKAMGYTKKVYEGGSNVDQFVTRFLLKETANQIQSLLSSVESAVEAIEEQTSQLRQNHIKPSHSAAQTWCGSPTPASAPNHKLMAMEQGKTLPSATEDAKEEGLEAQISRLAELIGRLESKALWFDLQQRLSDEDGTNMHLQLVRQEMAVCPEQLSEFLDSLRQYLRGTTGVRNCFHITAVRLSDGFTFVIYEFWETEEAWKRHLQSPLCKAFRHVKVDTLSQPEALSRILVPAAWCTVGRD.

Arg10 bears the Omega-N-methylarginine mark. Arg42 is subject to Asymmetric dimethylarginine. EF-hand domains follow at residues 60 to 95 (GGTA…GVLN) and 96 to 129 (EKEL…HMGD). The Ca(2+) site is built by Asp73, Asn75, Asp77, Lys79, Glu84, Asp107, Asp109, Thr111, His113, and Glu118. Residues 170 to 201 (LKETANQIQSLLSSVESAVEAIEEQTSQLRQN) adopt a coiled-coil conformation. The 90-residue stretch at 286–375 (QLVRQEMAVC…SQPEALSRIL (90 aa)) folds into the ABM domain.

As to quaternary structure, interacts (calcium-dependent) with ADORA2A and GRM5. As to expression, expressed in brain. Expressed in the spinal dorsal horn with especially strong expression in lamina IIi; found in excitory synaptic boutons and in ependymal cells (at protein level).

The protein resides in the cytoplasm. The protein localises to the cell projection. Its subcellular location is the dendrite. It localises to the axon. It is found in the cell membrane. In terms of biological role, may act as a signaling scaffold protein that senses intracellular calcium. Can modulate ligand-induced internalization of ADORA2A and coupling efficiency of mGluR5/GRM5; for both receptors may regulate signaling activity such as promoting MAPK1/3 (ERK1/2) activation. The sequence is that of N-terminal EF-hand calcium-binding protein 2 (NECAB2) from Homo sapiens (Human).